A 198-amino-acid polypeptide reads, in one-letter code: LIM domain-containing protein D (198 aa).

Residues 5-65 enclose the LIM zinc-binding domain; sequence GKCTRCQKTV…ANHYPVGGLS (61 aa).

The protein localises to the cell projection. It is found in the pseudopodium. It localises to the cytoplasm. Its subcellular location is the cell cortex. The protein resides in the cytoskeleton. In terms of biological role, binds to F-actin and may modulate the chemotactic response during early development and contribute to the maintenance of the strength of the actin cytoskeleton. The polypeptide is LIM domain-containing protein D (limD) (Dictyostelium discoideum (Social amoeba)).